Here is a 260-residue protein sequence, read N- to C-terminus: 3-dehydroquinate dehydratase (260 aa).

Residues Glu50–Arg52 and Arg86 contribute to the 3-dehydroquinate site. Catalysis depends on His148, which acts as the Proton donor/acceptor. Lys175 acts as the Schiff-base intermediate with substrate in catalysis. 3-dehydroquinate-binding residues include Arg217, Ser236, and Gln240.

This sequence belongs to the type-I 3-dehydroquinase family. In terms of assembly, homodimer.

The catalysed reaction is 3-dehydroquinate = 3-dehydroshikimate + H2O. It participates in metabolic intermediate biosynthesis; chorismate biosynthesis; chorismate from D-erythrose 4-phosphate and phosphoenolpyruvate: step 3/7. Involved in the third step of the chorismate pathway, which leads to the biosynthesis of aromatic amino acids. Catalyzes the cis-dehydration of 3-dehydroquinate (DHQ) and introduces the first double bond of the aromatic ring to yield 3-dehydroshikimate. This Aromatoleum aromaticum (strain DSM 19018 / LMG 30748 / EbN1) (Azoarcus sp. (strain EbN1)) protein is 3-dehydroquinate dehydratase.